Consider the following 227-residue polypeptide: Cytochrome c oxidase subunit 2 (227 aa).

At 1–14 (MAYPFQLGLQDATS) the chain is on the mitochondrial intermembrane side. A helical transmembrane segment spans residues 15–45 (PIMEELTNFHDHTLMIVFLISSLVLYIISLM). The Mitochondrial matrix portion of the chain corresponds to 46–59 (LTTKLTHTSTMDAQ). Residues 60-87 (EVETIWTILPAVILILIALPSLRILYMM) form a helical membrane-spanning segment. Residues 88–227 (DEINNPVLTV…YFENWSASMI (140 aa)) are Mitochondrial intermembrane-facing. Cu cation contacts are provided by H161, C196, E198, C200, H204, and M207. Residue E198 coordinates Mg(2+). Y218 bears the Phosphotyrosine mark.

This sequence belongs to the cytochrome c oxidase subunit 2 family. In terms of assembly, component of the cytochrome c oxidase (complex IV, CIV), a multisubunit enzyme composed of 14 subunits. The complex is composed of a catalytic core of 3 subunits MT-CO1, MT-CO2 and MT-CO3, encoded in the mitochondrial DNA, and 11 supernumerary subunits COX4I, COX5A, COX5B, COX6A, COX6B, COX6C, COX7A, COX7B, COX7C, COX8 and NDUFA4, which are encoded in the nuclear genome. The complex exists as a monomer or a dimer and forms supercomplexes (SCs) in the inner mitochondrial membrane with NADH-ubiquinone oxidoreductase (complex I, CI) and ubiquinol-cytochrome c oxidoreductase (cytochrome b-c1 complex, complex III, CIII), resulting in different assemblies (supercomplex SCI(1)III(2)IV(1) and megacomplex MCI(2)III(2)IV(2)). Found in a complex with TMEM177, COA6, COX18, COX20, SCO1 and SCO2. Interacts with TMEM177 in a COX20-dependent manner. Interacts with COX20. Interacts with COX16. Cu cation serves as cofactor.

It is found in the mitochondrion inner membrane. The catalysed reaction is 4 Fe(II)-[cytochrome c] + O2 + 8 H(+)(in) = 4 Fe(III)-[cytochrome c] + 2 H2O + 4 H(+)(out). In terms of biological role, component of the cytochrome c oxidase, the last enzyme in the mitochondrial electron transport chain which drives oxidative phosphorylation. The respiratory chain contains 3 multisubunit complexes succinate dehydrogenase (complex II, CII), ubiquinol-cytochrome c oxidoreductase (cytochrome b-c1 complex, complex III, CIII) and cytochrome c oxidase (complex IV, CIV), that cooperate to transfer electrons derived from NADH and succinate to molecular oxygen, creating an electrochemical gradient over the inner membrane that drives transmembrane transport and the ATP synthase. Cytochrome c oxidase is the component of the respiratory chain that catalyzes the reduction of oxygen to water. Electrons originating from reduced cytochrome c in the intermembrane space (IMS) are transferred via the dinuclear copper A center (CU(A)) of subunit 2 and heme A of subunit 1 to the active site in subunit 1, a binuclear center (BNC) formed by heme A3 and copper B (CU(B)). The BNC reduces molecular oxygen to 2 water molecules using 4 electrons from cytochrome c in the IMS and 4 protons from the mitochondrial matrix. This is Cytochrome c oxidase subunit 2 (MT-CO2) from Dacnomys millardi (Millard's rat).